The sequence spans 960 residues: Putative helicase L207/L206 (960 aa).

Residues 1–32 form a disordered region; the sequence is MTSKTENKKSVSSKTGRTTNNSTNKKTTEKSV. The segment covering 12–25 has biased composition (low complexity); the sequence is SSKTGRTTNNSTNK. In terms of domain architecture, SF3 helicase spans 646-807; it reads SMREYILTLL…FIKHSEATKK (162 aa).

The polypeptide is Putative helicase L207/L206 (Acanthamoeba polyphaga mimivirus (APMV)).